Consider the following 885-residue polypeptide: Alanine--tRNA ligase (885 aa).

Zn(2+) is bound by residues histidine 563, histidine 567, cysteine 677, and histidine 681. A disordered region spans residues 848-868; the sequence is LGGKGGGGRPDRAQGGAPSLA.

The protein belongs to the class-II aminoacyl-tRNA synthetase family. Zn(2+) is required as a cofactor.

Its subcellular location is the cytoplasm. The catalysed reaction is tRNA(Ala) + L-alanine + ATP = L-alanyl-tRNA(Ala) + AMP + diphosphate. In terms of biological role, catalyzes the attachment of alanine to tRNA(Ala) in a two-step reaction: alanine is first activated by ATP to form Ala-AMP and then transferred to the acceptor end of tRNA(Ala). Also edits incorrectly charged Ser-tRNA(Ala) and Gly-tRNA(Ala) via its editing domain. The protein is Alanine--tRNA ligase of Paracoccus denitrificans (strain Pd 1222).